The sequence spans 1550 residues: Pentafunctional AROM polypeptide (1550 aa).

Positions 1–379 are 3-dehydroquinate synthase; it reads MSIERVPILG…YQLKAHQVSK (379 aa). NAD(+) contacts are provided by residues 42–44, 80–83, 111–113, and aspartate 116; these read DTN, ENNK, and GGV. 7-phospho-2-dehydro-3-deoxy-D-arabino-heptonate is bound at residue arginine 127. 136–137 is an NAD(+) binding site; the sequence is TT. Positions 143 and 149 each coordinate 7-phospho-2-dehydro-3-deoxy-D-arabino-heptonate. Lysine 158 contacts NAD(+). Residue asparagine 159 coordinates 7-phospho-2-dehydro-3-deoxy-D-arabino-heptonate. Residues 176–179 and asparagine 187 contribute to the NAD(+) site; that span reads FLET. Glutamate 191 lines the Zn(2+) pocket. 7-phospho-2-dehydro-3-deoxy-D-arabino-heptonate contacts are provided by residues 191–194 and lysine 243; that span reads EVVK. Glutamate 253 serves as the catalytic Proton acceptor; for 3-dehydroquinate synthase activity. 7-phospho-2-dehydro-3-deoxy-D-arabino-heptonate contacts are provided by residues 257–261 and histidine 264; that span reads RNLLN. Position 264 (histidine 264) interacts with Zn(2+). Histidine 268 (proton acceptor; for 3-dehydroquinate synthase activity) is an active-site residue. 7-phospho-2-dehydro-3-deoxy-D-arabino-heptonate-binding residues include histidine 280 and lysine 351. Histidine 280 serves as a coordination point for Zn(2+). The tract at residues 392-837 is EPSP synthase; the sequence is VHPFTNPPKE…WDILHSKFKI (446 aa). A shikimate kinase region spans residues 857–1047; sequence DKGVIVIGMR…VPTGRSTAVV (191 aa). 864–871 contributes to the ATP binding site; it reads GMRGTGKS. Positions 1048–1257 are 3-dehydroquinase; it reads LTLPDLNNVA…NDDGLLTIGE (210 aa). Residue arginine 1193 is the Schiff-base intermediate with substrate; for 3-dehydroquinate dehydratase activity of the active site. A shikimate dehydrogenase region spans residues 1270–1550; it reads AKKFWVIGSP…EIIHRAVVEE (281 aa).

This sequence in the N-terminal section; belongs to the sugar phosphate cyclases superfamily. Dehydroquinate synthase family. It in the 2nd section; belongs to the EPSP synthase family. The protein in the 3rd section; belongs to the shikimate kinase family. In the 4th section; belongs to the type-I 3-dehydroquinase family. This sequence in the C-terminal section; belongs to the shikimate dehydrogenase family. Homodimer. It depends on Zn(2+) as a cofactor.

The protein localises to the cytoplasm. It catalyses the reaction 7-phospho-2-dehydro-3-deoxy-D-arabino-heptonate = 3-dehydroquinate + phosphate. The enzyme catalyses 3-dehydroquinate = 3-dehydroshikimate + H2O. It carries out the reaction shikimate + NADP(+) = 3-dehydroshikimate + NADPH + H(+). The catalysed reaction is shikimate + ATP = 3-phosphoshikimate + ADP + H(+). It catalyses the reaction 3-phosphoshikimate + phosphoenolpyruvate = 5-O-(1-carboxyvinyl)-3-phosphoshikimate + phosphate. Its pathway is metabolic intermediate biosynthesis; chorismate biosynthesis; chorismate from D-erythrose 4-phosphate and phosphoenolpyruvate: step 2/7. The protein operates within metabolic intermediate biosynthesis; chorismate biosynthesis; chorismate from D-erythrose 4-phosphate and phosphoenolpyruvate: step 3/7. It participates in metabolic intermediate biosynthesis; chorismate biosynthesis; chorismate from D-erythrose 4-phosphate and phosphoenolpyruvate: step 4/7. It functions in the pathway metabolic intermediate biosynthesis; chorismate biosynthesis; chorismate from D-erythrose 4-phosphate and phosphoenolpyruvate: step 5/7. Its pathway is metabolic intermediate biosynthesis; chorismate biosynthesis; chorismate from D-erythrose 4-phosphate and phosphoenolpyruvate: step 6/7. The AROM polypeptide catalyzes 5 consecutive enzymatic reactions in prechorismate polyaromatic amino acid biosynthesis. In Candida dubliniensis (strain CD36 / ATCC MYA-646 / CBS 7987 / NCPF 3949 / NRRL Y-17841) (Yeast), this protein is Pentafunctional AROM polypeptide.